We begin with the raw amino-acid sequence, 508 residues long: PTS system mannitol-specific EIICB component (508 aa).

The Cytoplasmic portion of the chain corresponds to 1-30 (MSQTETQENKGLGRKVQAFGSFLSSMIMPN). In terms of domain architecture, PTS EIIC type-2 spans 19–351 (FGSFLSSMIM…LKFTKEPEED (333 aa)). Residues 31 to 52 (IGAFIAWGFIAAIFIDGGWWPN) traverse the membrane as a helical segment. The Extracellular portion of the chain corresponds to 53-56 (KDLS). The helical transmembrane segment at 57–77 (ELAGPMISYLIPLLIAYSGGR) threads the bilayer. At 78–141 (LIHEMRGGII…QGFEMLFNNF (64 aa)) the chain is on the cytoplasmic side. Residues 142–163 (SAGILGFIMTIVGFKILAPIME) traverse the membrane as a helical segment. Over 164 to 172 (FIMHILSLA) the chain is Extracellular. A helical membrane pass occupies residues 173–193 (VEALVHAHLLPLVSIIVEPAK). At 194–280 (IVFLNNAINH…VLMRPLLFIA (87 aa)) the chain is on the cytoplasmic side. Residues 281 to 300 (VILGGMTGVATYSLLDFGFK) traverse the membrane as a helical segment. Residues 301–320 (SPASPGSFIVYMLNAPKGEF) are Extracellular-facing. A helical transmembrane segment spans residues 321 to 342 (LHMVLGVLLAAIVSFIVAALIL). The Cytoplasmic segment spans residues 343–508 (KFTKEPEEDL…RYDELLENLK (166 aa)). The tract at residues 355-400 (ATEKMEASKGKKSSVSSKLKGNEDNNATSTTASTSTSENNEEQSEE) is disordered. Positions 367–392 (SSVSSKLKGNEDNNATSTTASTSTSE) are enriched in low complexity. Positions 420-508 (NHVIFACDAG…RYDELLENLK (89 aa)) constitute a PTS EIIB type-2 domain. The active-site Phosphocysteine intermediate; for EIIB activity is cysteine 426. Residue cysteine 426 is modified to Phosphocysteine; by EIIA.

Homodimer.

The protein resides in the cell membrane. The catalysed reaction is D-mannitol(out) + N(pros)-phospho-L-histidyl-[protein] = D-mannitol 1-phosphate(in) + L-histidyl-[protein]. The phosphoenolpyruvate-dependent sugar phosphotransferase system (sugar PTS), a major carbohydrate active transport system, catalyzes the phosphorylation of incoming sugar substrates concomitantly with their translocation across the cell membrane. The enzyme II CmtAB PTS system is involved in D-mannitol transport. The sequence is that of PTS system mannitol-specific EIICB component (mtlA) from Staphylococcus saprophyticus subsp. saprophyticus (strain ATCC 15305 / DSM 20229 / NCIMB 8711 / NCTC 7292 / S-41).